The sequence spans 327 residues: Malate dehydrogenase (327 aa).

Residue 11–17 (GAAGQIG) participates in NAD(+) binding. R92 and R98 together coordinate substrate. NAD(+) contacts are provided by residues N105, Q112, and 129 to 131 (VGN). Substrate-binding residues include N131 and R162. Residue H187 is the Proton acceptor of the active site.

The protein belongs to the LDH/MDH superfamily. MDH type 2 family.

It catalyses the reaction (S)-malate + NAD(+) = oxaloacetate + NADH + H(+). In terms of biological role, catalyzes the reversible oxidation of malate to oxaloacetate. This Leptospira biflexa serovar Patoc (strain Patoc 1 / Ames) protein is Malate dehydrogenase.